Reading from the N-terminus, the 95-residue chain is Small ribosomal subunit protein uS19 (95 aa).

This sequence belongs to the universal ribosomal protein uS19 family.

Its function is as follows. Protein S19 forms a complex with S13 that binds strongly to the 16S ribosomal RNA. The sequence is that of Small ribosomal subunit protein uS19 from Coxiella burnetii (strain CbuK_Q154) (Coxiella burnetii (strain Q154)).